We begin with the raw amino-acid sequence, 133 residues long: Histone H2A.1 (133 aa).

Residues methionine 1–serine 23 form a disordered region. Serine 2 bears the N-acetylserine mark. Residues lysine 6, lysine 9, lysine 11, lysine 13, and lysine 18 each carry the N6-acetyllysine modification. Serine 123 carries the post-translational modification Phosphoserine. Lysine 124 is covalently cross-linked (Glycyl lysine isopeptide (Lys-Gly) (interchain with G-Cter in ubiquitin)). A Phosphoserine modification is found at serine 129.

Belongs to the histone H2A family. In terms of assembly, the nucleosome is a histone octamer containing two molecules each of H2A, H2B, H3 and H4 assembled in one H3-H4 heterotetramer and two H2A-H2B heterodimers. The octamer wraps approximately 147 bp of DNA. Post-translationally, monoubiquitination of Lys-124 gives a specific tag for epigenetic transcriptional repression. In terms of processing, acetylation occurs almost exclusively in the MAC.

The protein localises to the nucleus. The protein resides in the chromosome. Its function is as follows. Core component of nucleosome. Nucleosomes wrap and compact DNA into chromatin, limiting DNA accessibility to the cellular machineries which require DNA as a template. Histones thereby play a central role in transcription regulation, DNA repair, DNA replication and chromosomal stability. DNA accessibility is regulated via a complex set of post-translational modifications of histones, also called histone code, and nucleosome remodeling. The protein is Histone H2A.1 (HTA2) of Tetrahymena pyriformis.